The sequence spans 637 residues: Chaperone protein DnaK (637 aa).

Position 196 is a phosphothreonine; by autocatalysis (Thr-196). 2 disordered regions span residues 484 to 528 and 598 to 637; these read KATG…EVDT and TEAGAPGAAGAAGAAGQGQSASSGKDDEVKNADFEVVDDK. Residues 501–528 show a composition bias toward basic and acidic residues; that stretch reads SETEIEKMKKDASSHADEDKKKKEEVDT. Residues 600–620 are compositionally biased toward low complexity; sequence AGAPGAAGAAGAAGQGQSASS. The span at 621–637 shows a compositional bias: basic and acidic residues; it reads GKDDEVKNADFEVVDDK.

Belongs to the heat shock protein 70 family.

Its function is as follows. Acts as a chaperone. The protein is Chaperone protein DnaK of Chloroherpeton thalassium (strain ATCC 35110 / GB-78).